The primary structure comprises 287 residues: 23S rRNA (uridine(2479)-2'-O)-methyltransferase (287 aa).

S-adenosyl-L-methionine is bound by residues 210-211 (TD), Gly232, and 252-254 (IPM).

It belongs to the class IV-like SAM-binding methyltransferase superfamily. RNA methyltransferase TsnR/AvirB family. As to quaternary structure, homodimer.

It carries out the reaction uridine(2479) in 23S rRNA + S-adenosyl-L-methionine = 2'-O-methyluridine(2479) in 23S rRNA + S-adenosyl-L-homocysteine + H(+). Its function is as follows. Specifically methylates the 2'-O-ribose position of uridine-2479 in 23S ribosomal RNA. Confers resistance to antibiotic avilamycin, an orthosomycin antibiotic. The chain is 23S rRNA (uridine(2479)-2'-O)-methyltransferase (aviRb) from Streptomyces viridochromogenes.